The chain runs to 247 residues: MTFSILSIFVFGLISSSVALGPAPVLLGKAENFAILSETGVSNVPDSSVNCDIGVSPIGASGVTGFSLTGDSGGSFSTSKQVTGRVYASTYGDPTPASLTTAVFDMENAYKDAQERIDPDFTNLHTGALGGAILVPGLYKFTTGVSITADLVLTGGPTDTYIFQIAGTLSLAAGVKINLVGGLLPANVVWAVADSVTVAATSSFQGILLGKTQVVVNTNASVEGRILAQTAVVLQKATVIVPGVCGA.

Positions 1–19 (MTFSILSIFVFGLISSSVA) are cleaved as a signal peptide. N219 carries an N-linked (GlcNAc...) asparagine glycan.

It belongs to the ice-binding protein family.

It localises to the secreted. Binds ice crystals and most probably inhibits their growth in order to prevent cell damage from extracellular ice. This Flammulina populicola (Enokitake mushroom) protein is Ice-binding protein.